The sequence spans 401 residues: Argininosuccinate synthase (401 aa).

Residues 10 to 18 and A38 each bind ATP; that span reads AYSGGVDTS. Y89 contacts L-citrulline. G119 is a binding site for ATP. The L-aspartate site is built by T121, N125, and D126. N125 provides a ligand contact to L-citrulline. L-citrulline is bound by residues R129, S177, S186, E262, and Y274.

The protein belongs to the argininosuccinate synthase family. Type 1 subfamily. As to quaternary structure, homotetramer.

The protein resides in the cytoplasm. It carries out the reaction L-citrulline + L-aspartate + ATP = 2-(N(omega)-L-arginino)succinate + AMP + diphosphate + H(+). Its pathway is amino-acid biosynthesis; L-arginine biosynthesis; L-arginine from L-ornithine and carbamoyl phosphate: step 2/3. The protein is Argininosuccinate synthase of Prochlorococcus marinus (strain MIT 9303).